The chain runs to 156 residues: Small ribosomal subunit protein uS7 (156 aa).

The protein belongs to the universal ribosomal protein uS7 family. As to quaternary structure, part of the 30S ribosomal subunit. Contacts proteins S9 and S11.

Its function is as follows. One of the primary rRNA binding proteins, it binds directly to 16S rRNA where it nucleates assembly of the head domain of the 30S subunit. Is located at the subunit interface close to the decoding center, probably blocks exit of the E-site tRNA. In Nitratidesulfovibrio vulgaris (strain DSM 19637 / Miyazaki F) (Desulfovibrio vulgaris), this protein is Small ribosomal subunit protein uS7.